Here is a 496-residue protein sequence, read N- to C-terminus: Maturase K (496 aa).

Belongs to the intron maturase 2 family. MatK subfamily.

It localises to the plastid. The protein localises to the chloroplast. Usually encoded in the trnK tRNA gene intron. Probably assists in splicing its own and other chloroplast group II introns. This chain is Maturase K, found in Paeonia officinalis (Common peony).